The chain runs to 433 residues: Signal recognition particle 54 kDa protein (433 aa).

GTP is bound by residues 106–113, 186–190, and 244–247; these read GVEGSGKT, DTAGR, and TKMD.

The protein belongs to the GTP-binding SRP family. SRP54 subfamily. As to quaternary structure, part of the signal recognition particle protein translocation system, which is composed of SRP and FtsY. Archaeal SRP consists of a 7S RNA molecule of 300 nucleotides and two protein subunits: SRP54 and SRP19.

Its subcellular location is the cytoplasm. It carries out the reaction GTP + H2O = GDP + phosphate + H(+). Functionally, involved in targeting and insertion of nascent membrane proteins into the cytoplasmic membrane. Binds to the hydrophobic signal sequence of the ribosome-nascent chain (RNC) as it emerges from the ribosomes. The SRP-RNC complex is then targeted to the cytoplasmic membrane where it interacts with the SRP receptor FtsY. The sequence is that of Signal recognition particle 54 kDa protein from Pyrobaculum aerophilum (strain ATCC 51768 / DSM 7523 / JCM 9630 / CIP 104966 / NBRC 100827 / IM2).